The sequence spans 434 residues: Glutamate-1-semialdehyde 2,1-aminomutase 1 (434 aa).

The residue at position 270 (Lys-270) is an N6-(pyridoxal phosphate)lysine.

This sequence belongs to the class-III pyridoxal-phosphate-dependent aminotransferase family. HemL subfamily. As to quaternary structure, homodimer. The cofactor is pyridoxal 5'-phosphate.

It localises to the cytoplasm. It catalyses the reaction (S)-4-amino-5-oxopentanoate = 5-aminolevulinate. The protein operates within porphyrin-containing compound metabolism; protoporphyrin-IX biosynthesis; 5-aminolevulinate from L-glutamyl-tRNA(Glu): step 2/2. In Bacillus anthracis (strain A0248), this protein is Glutamate-1-semialdehyde 2,1-aminomutase 1.